A 264-amino-acid chain; its full sequence is 3-methyl-2-oxobutanoate hydroxymethyltransferase (264 aa).

2 residues coordinate Mg(2+): D45 and D84. Residues 45-46 (DS), D84, and K112 each bind 3-methyl-2-oxobutanoate. Mg(2+) is bound at residue E114. The Proton acceptor role is filled by E181.

It belongs to the PanB family. Homodecamer; pentamer of dimers. It depends on Mg(2+) as a cofactor.

It is found in the cytoplasm. The enzyme catalyses 3-methyl-2-oxobutanoate + (6R)-5,10-methylene-5,6,7,8-tetrahydrofolate + H2O = 2-dehydropantoate + (6S)-5,6,7,8-tetrahydrofolate. The protein operates within cofactor biosynthesis; (R)-pantothenate biosynthesis; (R)-pantoate from 3-methyl-2-oxobutanoate: step 1/2. Catalyzes the reversible reaction in which hydroxymethyl group from 5,10-methylenetetrahydrofolate is transferred onto alpha-ketoisovalerate to form ketopantoate. This chain is 3-methyl-2-oxobutanoate hydroxymethyltransferase, found in Edwardsiella ictaluri (strain 93-146).